A 448-amino-acid chain; its full sequence is Nuclear distribution protein PAC1 (448 aa).

Residues 9 to 41 form the LisH domain; that stretch reads QAEELHKSIIAYLAANNFQDSVTAMRTELNLGE. The segment at 74–95 is disordered; sequence SATPTSLSNRKQDPASWLPAGP. 7 WD repeats span residues 102 to 143, 145 to 185, 189 to 236, 239 to 278, 283 to 343, 345 to 384, and 389 to 444; these read SHRT…RTVK, HTKA…KNIR, GHDH…CLKT, GHSD…PETK, GHEH…IKTL, GHDN…KCVK, and MHEH…TSLR.

Belongs to the WD repeat LIS1/nudF family. Self-associates. Interacts with NDL1 and dynein.

The protein resides in the cytoplasm. The protein localises to the cytoskeleton. It localises to the spindle pole. Its function is as follows. Positively regulates the activity of the minus-end directed microtubule motor protein dynein. May enhance dynein-mediated microtubule sliding by targeting dynein to the microtubule plus end. Required for nuclear migration during vegetative growth as well as development. Required for retrograde early endosome (EE) transport from the hyphal tip. Required for localization of dynein to the mitotic spindle poles. Recruits additional proteins to the dynein complex at SPBs. The protein is Nuclear distribution protein PAC1 of Fusarium vanettenii (strain ATCC MYA-4622 / CBS 123669 / FGSC 9596 / NRRL 45880 / 77-13-4) (Fusarium solani subsp. pisi).